Consider the following 903-residue polypeptide: Protein translocase subunit SecA (903 aa).

ATP contacts are provided by residues Gln-87, 105-109 (GEGKT), and Asp-507. Disordered regions lie at residues 565 to 584 (ESRR…GDPG) and 855 to 877 (AEPG…LASQ). Residues Cys-887, Cys-889, Cys-898, and His-899 each contribute to the Zn(2+) site.

Belongs to the SecA family. In terms of assembly, monomer and homodimer. Part of the essential Sec protein translocation apparatus which comprises SecA, SecYEG and auxiliary proteins SecDF-YajC and YidC. The cofactor is Zn(2+).

It localises to the cell inner membrane. It is found in the cytoplasm. The catalysed reaction is ATP + H2O + cellular proteinSide 1 = ADP + phosphate + cellular proteinSide 2.. Its function is as follows. Part of the Sec protein translocase complex. Interacts with the SecYEG preprotein conducting channel. Has a central role in coupling the hydrolysis of ATP to the transfer of proteins into and across the cell membrane, serving both as a receptor for the preprotein-SecB complex and as an ATP-driven molecular motor driving the stepwise translocation of polypeptide chains across the membrane. The polypeptide is Protein translocase subunit SecA (Chromobacterium violaceum (strain ATCC 12472 / DSM 30191 / JCM 1249 / CCUG 213 / NBRC 12614 / NCIMB 9131 / NCTC 9757 / MK)).